A 607-amino-acid polypeptide reads, in one-letter code: ATP-dependent rRNA helicase SPB4 (607 aa).

The short motif at 7–35 is the Q motif element; sequence WDDLEYPIQPWIRSAVDVMGFENMTPVQA. Residues 38–224 form the Helicase ATP-binding domain; it reads IPLFARNKDV…KTGLRNPVKV (187 aa). Position 51 to 58 (51 to 58) interacts with ATP; that stretch reads SVTGSGKT. Positions 172 to 175 match the DEAD box motif; that stretch reads DEAD. Residues 248-404 enclose the Helicase C-terminal domain; sequence KLEQVISIIN…EISLDIVNLP (157 aa). The tract at residues 527–607 is disordered; that stretch reads KSELKKKNMS…NGMQGSFDDL (81 aa). Residues 529 to 565 adopt a coiled-coil conformation; the sequence is ELKKKNMSWSNNTQSKEEKVERRTKMALKRKRIEEEL. 2 stretches are compositionally biased toward basic and acidic residues: residues 543–552 and 560–570; these read SKEEKVERRT and RIEEELSKEAD. Positions 587-601 are enriched in polar residues; sequence ILQNKKSKNSNNGMQ.

This sequence belongs to the DEAD box helicase family. DDX55/SPB4 subfamily. As to quaternary structure, component of pre-60S ribosomal complexes.

The protein resides in the nucleus. It localises to the nucleolus. The enzyme catalyses ATP + H2O = ADP + phosphate + H(+). Functionally, ATP-binding RNA helicase involved in the biogenesis of 60S ribosomal subunits. Binds 90S pre-ribosomal particles and dissociates from pre-60S ribosomal particles after processing of 27SB pre-rRNA. Required for the normal formation of 18S rRNA through the processing of pre-rRNAs at sites A0, A1 and A2, and the normal formation of 25S and 5.8S rRNAs through the processing of pre-rRNAs at sites C1 and C2. This Vanderwaltozyma polyspora (strain ATCC 22028 / DSM 70294 / BCRC 21397 / CBS 2163 / NBRC 10782 / NRRL Y-8283 / UCD 57-17) (Kluyveromyces polysporus) protein is ATP-dependent rRNA helicase SPB4.